We begin with the raw amino-acid sequence, 114 residues long: Chaperone protein YscY (114 aa).

As to quaternary structure, binds to YscX.

It localises to the cytoplasm. In terms of biological role, required for Yop secretion. Functions probably as a chaperone which stabilizes YscX within the cell, before its secretion. In Yersinia enterocolitica serotype O:8 / biotype 1B (strain NCTC 13174 / 8081), this protein is Chaperone protein YscY (yscY).